Consider the following 246-residue polypeptide: tRNA pseudouridine synthase A (246 aa).

The Nucleophile role is filled by Asp-52. A substrate-binding site is contributed by Tyr-110.

This sequence belongs to the tRNA pseudouridine synthase TruA family. In terms of assembly, homodimer.

It catalyses the reaction uridine(38/39/40) in tRNA = pseudouridine(38/39/40) in tRNA. Its function is as follows. Formation of pseudouridine at positions 38, 39 and 40 in the anticodon stem and loop of transfer RNAs. In Exiguobacterium sp. (strain ATCC BAA-1283 / AT1b), this protein is tRNA pseudouridine synthase A.